Here is a 128-residue protein sequence, read N- to C-terminus: MGLMWGLFSVIIASVAQLSLGFAASHLPPMTHLWDFIAALLAFGLDARILLLGLLGYLLSVFCWYKTLHKLALSKAYALLSMSYVLVWIASMVLPGWEGTFSLKALLGVACIMSGLMLIFLPTTKQRY.

The Cytoplasmic segment spans residues 1 to 2 (MG). The helical transmembrane segment at 3–23 (LMWGLFSVIIASVAQLSLGFA) threads the bilayer. Topologically, residues 24 to 35 (ASHLPPMTHLWD) are periplasmic. Residues 36-56 (FIAALLAFGLDARILLLGLLG) form a helical membrane-spanning segment. Residues 57 to 76 (YLLSVFCWYKTLHKLALSKA) lie on the Cytoplasmic side of the membrane. The chain crosses the membrane as a helical span at residues 77 to 97 (YALLSMSYVLVWIASMVLPGW). At 98 to 100 (EGT) the chain is on the periplasmic side. The helical transmembrane segment at 101–121 (FSLKALLGVACIMSGLMLIFL) threads the bilayer. The Cytoplasmic portion of the chain corresponds to 122–128 (PTTKQRY).

The protein belongs to the ArnF family. Heterodimer of ArnE and ArnF.

Its subcellular location is the cell inner membrane. Its pathway is bacterial outer membrane biogenesis; lipopolysaccharide biosynthesis. Translocates 4-amino-4-deoxy-L-arabinose-phosphoundecaprenol (alpha-L-Ara4N-phosphoundecaprenol) from the cytoplasmic to the periplasmic side of the inner membrane. The chain is Probable 4-amino-4-deoxy-L-arabinose-phosphoundecaprenol flippase subunit ArnF from Shigella sonnei (strain Ss046).